We begin with the raw amino-acid sequence, 426 residues long: Gamma-glutamyl phosphate reductase (426 aa).

Belongs to the gamma-glutamyl phosphate reductase family.

It localises to the cytoplasm. The catalysed reaction is L-glutamate 5-semialdehyde + phosphate + NADP(+) = L-glutamyl 5-phosphate + NADPH + H(+). It participates in amino-acid biosynthesis; L-proline biosynthesis; L-glutamate 5-semialdehyde from L-glutamate: step 2/2. In terms of biological role, catalyzes the NADPH-dependent reduction of L-glutamate 5-phosphate into L-glutamate 5-semialdehyde and phosphate. The product spontaneously undergoes cyclization to form 1-pyrroline-5-carboxylate. This chain is Gamma-glutamyl phosphate reductase, found in Ralstonia pickettii (strain 12J).